The primary structure comprises 468 residues: MSKPTTLYDKIWNDHLVHEAEDGTCLIYIDRHLVHEVTSPQAFEGLRVAGRKVHAPEKTLAVVDHNVPTTDRTKPNPDPESAEQIATLAQNAKDFGIEYYNEFDKRQGIVHVIGPEQGFTLPGTTIVCGDSHTSTHGAFGALAHGIGTSEVEHVLATQTLIQKKAKNMRAVVYGTLPDGVTAKDIILAIIGEIGTAGGTGYVLEYAGEAIRALTMEGRMTVCNMSIEGGARAGLVAPDEKAYEFLKGRPKAPRGADWDAAMRYWETLRSDDGAHFDHEIRLDAARLPPIVTWGTSPEDVISVTGKVPNPADIADEAKRLSKERALHYMGLAAGTRITDITLDRVFIGSCTNGRIEDLRAAAKIADGRTVNGNVNAMVVPGSGLVKEQAEAEGLDKIFIKAGFEWREPGCSMCLAMNPDKLKPEERCASTSNRNFEGRQGFKGRTHLVSPAMAAAAAIAGHFVDVREWH.

3 residues coordinate [4Fe-4S] cluster: cysteine 349, cysteine 409, and cysteine 412.

This sequence belongs to the aconitase/IPM isomerase family. LeuC type 1 subfamily. Heterodimer of LeuC and LeuD. [4Fe-4S] cluster is required as a cofactor.

The enzyme catalyses (2R,3S)-3-isopropylmalate = (2S)-2-isopropylmalate. Its pathway is amino-acid biosynthesis; L-leucine biosynthesis; L-leucine from 3-methyl-2-oxobutanoate: step 2/4. Its function is as follows. Catalyzes the isomerization between 2-isopropylmalate and 3-isopropylmalate, via the formation of 2-isopropylmaleate. The polypeptide is 3-isopropylmalate dehydratase large subunit (Nitrobacter hamburgensis (strain DSM 10229 / NCIMB 13809 / X14)).